The sequence spans 415 residues: 4-hydroxy-3-methylbut-2-enyl diphosphate reductase (415 aa).

C66 is a binding site for [4Fe-4S] cluster. H96 serves as a coordination point for (2E)-4-hydroxy-3-methylbut-2-enyl diphosphate. H96 is a binding site for dimethylallyl diphosphate. Residue H96 coordinates isopentenyl diphosphate. C158 serves as a coordination point for [4Fe-4S] cluster. A (2E)-4-hydroxy-3-methylbut-2-enyl diphosphate-binding site is contributed by H186. H186 is a binding site for dimethylallyl diphosphate. H186 lines the isopentenyl diphosphate pocket. E188 acts as the Proton donor in catalysis. A (2E)-4-hydroxy-3-methylbut-2-enyl diphosphate-binding site is contributed by T259. C297 contributes to the [4Fe-4S] cluster binding site. 4 residues coordinate (2E)-4-hydroxy-3-methylbut-2-enyl diphosphate: S326, S327, N328, and S388. Positions 326, 327, 328, and 388 each coordinate dimethylallyl diphosphate. Positions 326, 327, 328, and 388 each coordinate isopentenyl diphosphate.

Belongs to the IspH family. [4Fe-4S] cluster serves as cofactor.

The enzyme catalyses isopentenyl diphosphate + 2 oxidized [2Fe-2S]-[ferredoxin] + H2O = (2E)-4-hydroxy-3-methylbut-2-enyl diphosphate + 2 reduced [2Fe-2S]-[ferredoxin] + 2 H(+). It catalyses the reaction dimethylallyl diphosphate + 2 oxidized [2Fe-2S]-[ferredoxin] + H2O = (2E)-4-hydroxy-3-methylbut-2-enyl diphosphate + 2 reduced [2Fe-2S]-[ferredoxin] + 2 H(+). The protein operates within isoprenoid biosynthesis; dimethylallyl diphosphate biosynthesis; dimethylallyl diphosphate from (2E)-4-hydroxy-3-methylbutenyl diphosphate: step 1/1. It participates in isoprenoid biosynthesis; isopentenyl diphosphate biosynthesis via DXP pathway; isopentenyl diphosphate from 1-deoxy-D-xylulose 5-phosphate: step 6/6. Catalyzes the conversion of 1-hydroxy-2-methyl-2-(E)-butenyl 4-diphosphate (HMBPP) into a mixture of isopentenyl diphosphate (IPP) and dimethylallyl diphosphate (DMAPP). Acts in the terminal step of the DOXP/MEP pathway for isoprenoid precursor biosynthesis. The polypeptide is 4-hydroxy-3-methylbut-2-enyl diphosphate reductase (Acaryochloris marina (strain MBIC 11017)).